Reading from the N-terminus, the 238-residue chain is CD63 antigen (238 aa).

The Cytoplasmic segment spans residues 2 to 11 (AVEGGMKCVK). The helical transmembrane segment at 12–32 (FLLYVLLLAFCACAVGLIAVG) threads the bilayer. At 33–51 (VGAQLVLSQTIIQGATPGS) the chain is on the extracellular side. A helical transmembrane segment spans residues 52 to 72 (LLPVVIIAVGVFLFLVAFVGC). The Cytoplasmic portion of the chain corresponds to 73–81 (CGACKENYC). The chain crosses the membrane as a helical span at residues 82–102 (LMITFAIFLSLIMLVEVAAAI). Residues 103–203 (AGYVFRDKVM…KIGGWLRKNV (101 aa)) are Extracellular-facing. Residues N130, N150, and N172 are each glycosylated (N-linked (GlcNAc...) asparagine). Residues 204–224 (LVVAAAALGIAFVEVLGIVFA) traverse the membrane as a helical segment. Topologically, residues 225 to 238 (CCLVKSIRSGYEVM) are cytoplasmic. The Lysosomal targeting motif motif lies at 234-238 (GYEVM).

It belongs to the tetraspanin (TM4SF) family. In terms of assembly, interacts with TIMP1 and ITGB1 and recruits TIMP1 to ITGB1. Interacts with CD9. Identified in a complex with CD9 and ITGB3. Interacts with PMEL. Interacts with KDR/VEGFR2; identified in a complex with ITGB1 and KDR/VEGFR2 and is required to recruit KDR to ITGB1 complexes. Interacts with SYT7. In terms of processing, palmitoylated at a low, basal level in unstimulated platelets. The level of palmitoylation increases when platelets are activated by thrombin (in vitro). In terms of tissue distribution, detected in platelets (at protein level). Dysplastic nevi, radial growth phase primary melanomas, hematopoietic cells, tissue macrophages.

It is found in the cell membrane. Its subcellular location is the lysosome membrane. It localises to the late endosome membrane. The protein localises to the endosome. The protein resides in the multivesicular body. It is found in the melanosome. Its subcellular location is the secreted. It localises to the extracellular exosome. The protein localises to the cell surface. Functions as a cell surface receptor for TIMP1 and plays a role in the activation of cellular signaling cascades. Plays a role in the activation of ITGB1 and integrin signaling, leading to the activation of AKT, FAK/PTK2 and MAP kinases. Promotes cell survival, reorganization of the actin cytoskeleton, cell adhesion, spreading and migration, via its role in the activation of AKT and FAK/PTK2. Plays a role in VEGFA signaling via its role in regulating the internalization of KDR/VEGFR2. Plays a role in intracellular vesicular transport processes, and is required for normal trafficking of the PMEL luminal domain that is essential for the development and maturation of melanocytes. Plays a role in the adhesion of leukocytes onto endothelial cells via its role in the regulation of SELP trafficking. May play a role in mast cell degranulation in response to Ms4a2/FceRI stimulation, but not in mast cell degranulation in response to other stimuli. This Homo sapiens (Human) protein is CD63 antigen (CD63).